We begin with the raw amino-acid sequence, 115 residues long: Hydrogenase maturation factor HypA (115 aa).

Residue H2 participates in Ni(2+) binding. The Zn(2+) site is built by C73, C76, C89, and C92.

It belongs to the HypA/HybF family.

In terms of biological role, involved in the maturation of [NiFe] hydrogenases. Required for nickel insertion into the metal center of the hydrogenase. The polypeptide is Hydrogenase maturation factor HypA (Shewanella halifaxensis (strain HAW-EB4)).